A 193-amino-acid polypeptide reads, in one-letter code: Large ribosomal subunit protein bL25 (193 aa).

Belongs to the bacterial ribosomal protein bL25 family. CTC subfamily. Part of the 50S ribosomal subunit; part of the 5S rRNA/L5/L18/L25 subcomplex. Contacts the 5S rRNA. Binds to the 5S rRNA independently of L5 and L18.

This is one of the proteins that binds to the 5S RNA in the ribosome where it forms part of the central protuberance. In Clostridium tetani (strain Massachusetts / E88), this protein is Large ribosomal subunit protein bL25.